A 416-amino-acid polypeptide reads, in one-letter code: Cotranscriptional regulator ARB2A (416 aa).

The first 18 residues, M1–A18, serve as a signal peptide directing secretion. The interval K208–Y247 is disordered. Basic and acidic residues predominate over residues P223–E236. Residue S293 is the Nucleophile of the active site. Positions H413–L416 match the Prevents secretion from ER motif.

The protein belongs to the ARB2A family. In terms of assembly, interacts with AGO2. Found in a complex, composed of AGO2, CHD7 and ARB2A.

Its subcellular location is the nucleus. It is found in the cytoplasm. The protein resides in the endoplasmic reticulum. In terms of biological role, plays a role in the regulation of alternative splicing, by interacting with AGO2 and CHD7. Seems to be required for stabilizing protein-protein interactions at the chromatin-spliceosome interface. May have hydrolase activity. This is Cotranscriptional regulator ARB2A from Homo sapiens (Human).